The following is a 119-amino-acid chain: Basic phospholipase A2 (119 aa).

7 disulfide bridges follow: Cys11/Cys71, Cys27/Cys118, Cys29/Cys45, Cys44/Cys99, Cys51/Cys92, Cys60/Cys85, and Cys78/Cys90. Tyr28, Gly30, and Gly32 together coordinate Ca(2+). The active site involves His48. Residue Asp49 coordinates Ca(2+). Asp93 is a catalytic residue.

It belongs to the phospholipase A2 family. Group I subfamily. D49 sub-subfamily. Requires Ca(2+) as cofactor. In terms of tissue distribution, expressed by the venom gland.

Its subcellular location is the secreted. The enzyme catalyses a 1,2-diacyl-sn-glycero-3-phosphocholine + H2O = a 1-acyl-sn-glycero-3-phosphocholine + a fatty acid + H(+). Functionally, snake venom phospholipase A2 (PLA2) that has several activities. It is myotoxic, has weak anticoagulant activity and inhibits neuromuscular transmission by blocking acetylcholine release from the nerve termini. PLA2 catalyzes the calcium-dependent hydrolysis of the 2-acyl groups in 3-sn-phosphoglycerides. This is Basic phospholipase A2 from Hydrophis schistosus (Beaked sea snake).